We begin with the raw amino-acid sequence, 303 residues long: MADAASQVLLGSGLTILSQPLMYVKVLIQVGYEPLPPTIGRNIFGRQVCQLPGLFCYAQHIASIDGRRGLFTGLTPRLCSGVLGTVVHGKVLQYYQESEKPEELGSVTVQKEYSSSFDRVIKETTREMIARSAATLITHPFHVITLRSMVQFIGRESKYCGLCDSIVTIYREEGIVGFFAGLIPRLLGDIISLWLCNSLAYLINTYALDSGVSTMNEMKSYSQAVTGFFASMLTYPFVLVSNLMAVNNCGLAGGSPPYSPIYTSWIDCWCMLQKAGNMSRGNSLFFRKVPCGKTYCYDLRMLI.

N-acetylalanine is present on Ala2. Residues 2 to 15 lie on the Mitochondrial intermembrane side of the membrane; the sequence is ADAASQVLLGSGLT. 2 Solcar repeats span residues 2 to 98 and 118 to 206; these read ADAA…YQES and DRVI…INTY. Residues 16 to 36 traverse the membrane as a helical segment; it reads ILSQPLMYVKVLIQVGYEPLP. Residues 37 to 77 are Cytoplasmic-facing; that stretch reads PTIGRNIFGRQVCQLPGLFCYAQHIASIDGRRGLFTGLTPR. A helical membrane pass occupies residues 78 to 92; that stretch reads LCSGVLGTVVHGKVL. Residues 93–135 are Mitochondrial intermembrane-facing; it reads QYYQESEKPEELGSVTVQKEYSSSFDRVIKETTREMIARSAAT. Residues 136-156 form a helical membrane-spanning segment; sequence LITHPFHVITLRSMVQFIGRE. Residues 157–180 are Cytoplasmic-facing; sequence SKYCGLCDSIVTIYREEGIVGFFA. A helical transmembrane segment spans residues 181–199; sequence GLIPRLLGDIISLWLCNSL. Residues 200 to 231 are Mitochondrial intermembrane-facing; it reads AYLINTYALDSGVSTMNEMKSYSQAVTGFFAS. The chain crosses the membrane as a helical span at residues 232–252; that stretch reads MLTYPFVLVSNLMAVNNCGLA. Topologically, residues 253-280 are cytoplasmic; that stretch reads GGSPPYSPIYTSWIDCWCMLQKAGNMSR. Residues 281–303 traverse the membrane as a helical segment; that stretch reads GNSLFFRKVPCGKTYCYDLRMLI.

This sequence belongs to the mitochondrial carrier (TC 2.A.29) family. Interacts with p15BID. In terms of tissue distribution, expressed in a wide variety of tissues. Predominant expressed in liver, kidney, heart, skeletal muscle and testis.

It localises to the mitochondrion outer membrane. Its function is as follows. Protein insertase that mediates insertion of transmembrane proteins into the mitochondrial outer membrane. Catalyzes insertion of proteins with alpha-helical transmembrane regions, such as signal-anchored, tail-anchored and multi-pass membrane proteins. Does not mediate insertion of beta-barrel transmembrane proteins. Also acts as a receptor for the truncated form of pro-apoptotic BH3-interacting domain death agonist (p15 BID) and has therefore a critical function in apoptosis. Regulates the quiescence/cycling of hematopoietic stem cells (HSCs). Acts as a regulator of mitochondrial fusion, essential for the naive-to-primed interconversion of embryonic stem cells (ESCs). Acts as a regulator of lipid homeostasis and has a regulatory role in adipocyte differentiation and biology. This is Mitochondrial carrier homolog 2 from Mus musculus (Mouse).